We begin with the raw amino-acid sequence, 475 residues long: Ribulose bisphosphate carboxylase large chain (475 aa).

The propeptide occupies 1 to 2; sequence MS. P3 carries the N-acetylproline modification. K14 is modified (N6,N6,N6-trimethyllysine). Substrate is bound by residues N123 and T173. K175 (proton acceptor) is an active-site residue. Substrate is bound at residue K177. Positions 201, 203, and 204 each coordinate Mg(2+). Position 201 is an N6-carboxylysine (K201). The active-site Proton acceptor is H294. Positions 295, 327, and 379 each coordinate substrate.

The protein belongs to the RuBisCO large chain family. Type I subfamily. In terms of assembly, heterohexadecamer of 8 large chains and 8 small chains; disulfide-linked. The disulfide link is formed within the large subunit homodimers. The cofactor is Mg(2+). The disulfide bond which can form in the large chain dimeric partners within the hexadecamer appears to be associated with oxidative stress and protein turnover.

The protein localises to the plastid. It localises to the chloroplast. It catalyses the reaction 2 (2R)-3-phosphoglycerate + 2 H(+) = D-ribulose 1,5-bisphosphate + CO2 + H2O. The catalysed reaction is D-ribulose 1,5-bisphosphate + O2 = 2-phosphoglycolate + (2R)-3-phosphoglycerate + 2 H(+). Functionally, ruBisCO catalyzes two reactions: the carboxylation of D-ribulose 1,5-bisphosphate, the primary event in carbon dioxide fixation, as well as the oxidative fragmentation of the pentose substrate in the photorespiration process. Both reactions occur simultaneously and in competition at the same active site. The protein is Ribulose bisphosphate carboxylase large chain of Staurastrum punctulatum (Green alga).